Consider the following 323-residue polypeptide: Nucleotide-binding protein ZMO1325 (323 aa).

Residue Gly-25–Ser-32 coordinates ATP. Asp-78–Thr-81 serves as a coordination point for GTP.

It belongs to the RapZ-like family.

In terms of biological role, displays ATPase and GTPase activities. This Zymomonas mobilis subsp. mobilis (strain ATCC 31821 / ZM4 / CP4) protein is Nucleotide-binding protein ZMO1325.